The following is a 102-amino-acid chain: Protein RnfH (102 aa).

This sequence belongs to the UPF0125 (RnfH) family.

The protein is Protein RnfH of Haemophilus influenzae (strain PittEE).